We begin with the raw amino-acid sequence, 308 residues long: MVGLQPSEVPPTTVVKFLGAGTAACFADLLTFPLDTAKVRLQIQGENPGVQSVQYRGVLGTILTMVRTEGPRSPYSGLVAGLHRQMSFASIRIGLYDSVKQFYTPKGTDHSSVAIRILAGCTTGAMAVTCAQPTDVVKVRFQAMIRLGTGGERKYRGTMDAYRTIAREEGVRGLWKGTWPNITRNAIVNCAEMVTYDIIKEKLLDSHLFTDNFPCHFVSAFGAGFCATVVASPVDVVKTRYMNAPPGRYRSPLHCMLRMVAQEGPTAFYKGFMPSFLRLGSWNVMMFVTYEQLKRALMKVQVLRESPF.

The Mitochondrial intermembrane portion of the chain corresponds to 1–10; sequence MVGLQPSEVP. Residues 11–32 traverse the membrane as a helical segment; the sequence is PTTVVKFLGAGTAACFADLLTF. Solcar repeat units follow at residues 11–102, 111–202, and 211–296; these read PTTV…VKQF, SSVA…IKEK, and DNFP…LKRA. At 33 to 73 the chain is on the mitochondrial matrix side; that stretch reads PLDTAKVRLQIQGENPGVQSVQYRGVLGTILTMVRTEGPRS. A helical membrane pass occupies residues 74-96; sequence PYSGLVAGLHRQMSFASIRIGLY. Topologically, residues 97–116 are mitochondrial intermembrane; that stretch reads DSVKQFYTPKGTDHSSVAIR. The helical transmembrane segment at 117-133 threads the bilayer; that stretch reads ILAGCTTGAMAVTCAQP. The Mitochondrial matrix portion of the chain corresponds to 134–179; it reads TDVVKVRFQAMIRLGTGGERKYRGTMDAYRTIAREEGVRGLWKGTW. A helical membrane pass occupies residues 180–196; it reads PNITRNAIVNCAEMVTY. The Mitochondrial intermembrane segment spans residues 197–213; it reads DIIKEKLLDSHLFTDNF. The helical transmembrane segment at 214–233 threads the bilayer; sequence PCHFVSAFGAGFCATVVASP. Over 234 to 267 the chain is Mitochondrial matrix; that stretch reads VDVVKTRYMNAPPGRYRSPLHCMLRMVAQEGPTA. The helical transmembrane segment at 268–290 threads the bilayer; the sequence is FYKGFMPSFLRLGSWNVMMFVTY. The segment at 275 to 297 is purine nucleotide binding; that stretch reads SFLRLGSWNVMMFVTYEQLKRAL. At 291-308 the chain is on the mitochondrial intermembrane side; it reads EQLKRALMKVQVLRESPF.

This sequence belongs to the mitochondrial carrier (TC 2.A.29) family. In terms of assembly, interacts with HAX1; the interaction is direct and calcium-dependent.

It localises to the mitochondrion inner membrane. Its function is as follows. Putative transmembrane transporter that plays a role in mitochondrial metabolism via an as yet unclear mechanism. Originally, this mitochondrial protein was thought to act as a proton transmembrane transporter from the mitochondrial intermembrane space into the matrix, causing proton leaks through the inner mitochondrial membrane, thereby uncoupling mitochondrial membrane potential generation from ATP synthesis. However, this function is controversial and uncoupling may not be the function, or at least not the main function, but rather a consequence of more conventional metabolite transporter activity. This Rattus norvegicus (Rat) protein is Putative mitochondrial transporter UCP3.